The chain runs to 792 residues: Phenylalanine--tRNA ligase beta subunit (792 aa).

Positions 39-147 constitute a tRNA-binding domain; the sequence is GEALDLIVVA…DDAPIGTPLA (109 aa). The B5 domain occupies 400–475; that stretch reads PAPASILLRR…RIRGYEHLPT (76 aa). The Mg(2+) site is built by aspartate 453, aspartate 459, glutamate 462, and glutamate 463. Residues 698–791 enclose the FDX-ACB domain; it reads SRFPFVRRDL…IQQRHDVRIR (94 aa).

Belongs to the phenylalanyl-tRNA synthetase beta subunit family. Type 1 subfamily. Tetramer of two alpha and two beta subunits. Mg(2+) is required as a cofactor.

The protein localises to the cytoplasm. The catalysed reaction is tRNA(Phe) + L-phenylalanine + ATP = L-phenylalanyl-tRNA(Phe) + AMP + diphosphate + H(+). The sequence is that of Phenylalanine--tRNA ligase beta subunit (pheT) from Xylella fastidiosa (strain 9a5c).